A 415-amino-acid polypeptide reads, in one-letter code: Histidine--tRNA ligase (415 aa).

Belongs to the class-II aminoacyl-tRNA synthetase family. As to quaternary structure, homodimer.

The protein resides in the cytoplasm. The catalysed reaction is tRNA(His) + L-histidine + ATP = L-histidyl-tRNA(His) + AMP + diphosphate + H(+). The chain is Histidine--tRNA ligase from Clostridium botulinum (strain Kyoto / Type A2).